Here is a 208-residue protein sequence, read N- to C-terminus: Small ribosomal subunit protein uS4 (208 aa).

The 63-residue stretch at 95-157 (RRIDNVVYRA…DRLKKLVRSN (63 aa)) folds into the S4 RNA-binding domain.

The protein belongs to the universal ribosomal protein uS4 family. As to quaternary structure, part of the 30S ribosomal subunit. Contacts protein S5. The interaction surface between S4 and S5 is involved in control of translational fidelity.

One of the primary rRNA binding proteins, it binds directly to 16S rRNA where it nucleates assembly of the body of the 30S subunit. Functionally, with S5 and S12 plays an important role in translational accuracy. In Borrelia turicatae (strain 91E135), this protein is Small ribosomal subunit protein uS4.